A 222-amino-acid chain; its full sequence is Interleukin-12 subunit alpha (222 aa).

The N-terminal stretch at 1 to 25 (MCPLRNLLLVATLVLLNHLDHLSLG) is a signal peptide. Intrachain disulfides connect C40/C113, C67/C199, and C88/C126. 2 N-linked (GlcNAc...) asparagine glycosylation sites follow: N42 and N96.

This sequence belongs to the IL-6 superfamily. Heterodimer with IL12B; disulfide-linked. This heterodimer is known as interleukin IL-12. Heterodimer with EBI3/IL27B; not disulfide-linked. This heterodimer is known as interleukin IL-35. Interacts with NBR1; this interaction promotes IL-12 secretion.

It localises to the secreted. Heterodimerizes with IL12B to form the IL-12 cytokine or with EBI3/IL27B to form the IL-35 cytokine. IL-12 is primarily produced by professional antigen-presenting cells (APCs) such as B-cells and dendritic cells (DCs) as well as macrophages and granulocytes and regulates T-cell and natural killer-cell responses, induces the production of interferon-gamma (IFN-gamma), favors the differentiation of T-helper 1 (Th1) cells and is an important link between innate resistance and adaptive immunity. Mechanistically, exerts its biological effects through a receptor composed of IL12R1 and IL12R2 subunits. Binding to the receptor results in the rapid tyrosine phosphorylation of a number of cellular substrates including the JAK family kinases TYK2 and JAK2. In turn, recruited STAT4 gets phosphorylated and translocates to the nucleus where it regulates cytokine/growth factor responsive genes. As part of IL-35, plays essential roles in maintaining the immune homeostasis of the liver microenvironment and also functions as an immune-suppressive cytokine. Mediates biological events through unconventional receptors composed of IL12RB2 and gp130/IL6ST heterodimers or homodimers. Signaling requires the transcription factors STAT1 and STAT4, which form a unique heterodimer that binds to distinct DNA sites. The sequence is that of Interleukin-12 subunit alpha (IL12A) from Sus scrofa (Pig).